A 222-amino-acid polypeptide reads, in one-letter code: Peptide methionine sulfoxide reductase MsrA (222 aa).

C60 is an active-site residue.

This sequence belongs to the MsrA Met sulfoxide reductase family.

The catalysed reaction is L-methionyl-[protein] + [thioredoxin]-disulfide + H2O = L-methionyl-(S)-S-oxide-[protein] + [thioredoxin]-dithiol. It catalyses the reaction [thioredoxin]-disulfide + L-methionine + H2O = L-methionine (S)-S-oxide + [thioredoxin]-dithiol. Has an important function as a repair enzyme for proteins that have been inactivated by oxidation. Catalyzes the reversible oxidation-reduction of methionine sulfoxide in proteins to methionine. This Pseudomonas putida (strain W619) protein is Peptide methionine sulfoxide reductase MsrA.